A 527-amino-acid chain; its full sequence is EGF domain-specific O-linked N-acetylglucosamine transferase (527 aa).

Residues 1–17 form the signal peptide; it reads MLKLLVLGVLLHDVSLS. The Required for optimal activity signature appears at 295–297; that stretch reads DYD. The N-linked (GlcNAc...) asparagine glycan is linked to Asn354. Residues 524 to 527 carry the Prevents secretion from ER motif; sequence RDEL.

Belongs to the glycosyltransferase 61 family.

The protein localises to the endoplasmic reticulum lumen. The enzyme catalyses L-seryl-[protein] + UDP-N-acetyl-alpha-D-glucosamine = 3-O-(N-acetyl-beta-D-glucosaminyl)-L-seryl-[protein] + UDP + H(+). It carries out the reaction L-threonyl-[protein] + UDP-N-acetyl-alpha-D-glucosamine = 3-O-(N-acetyl-beta-D-glucosaminyl)-L-threonyl-[protein] + UDP + H(+). In terms of biological role, catalyzes the transfer of a single N-acetylglucosamine from UDP-GlcNAc to a serine or threonine residue in extracellular proteins resulting in their modification with a beta-linked N-acetylglucosamine (O-GlcNAc). Specifically glycosylates the Thr residue located between the fifth and sixth conserved cysteines of folded EGF-like domains. This chain is EGF domain-specific O-linked N-acetylglucosamine transferase (EOGT), found in Canis lupus familiaris (Dog).